The chain runs to 305 residues: D-alanine--D-alanine ligase (305 aa).

An ATP-grasp domain is found at 99–300 (KLFFEKAGIR…YEEMIQTFVN (202 aa)). 126–181 (NFTGTYPVVVKPNQEGSTIGLTVAETEEELLQGIEEAFRHDDTILIEEFIAGTEVT) serves as a coordination point for ATP.

Belongs to the D-alanine--D-alanine ligase family.

It localises to the cytoplasm. It carries out the reaction 2 D-alanine + ATP = D-alanyl-D-alanine + ADP + phosphate + H(+). Its pathway is cell wall biogenesis; peptidoglycan biosynthesis. Cell wall formation. This chain is D-alanine--D-alanine ligase, found in Halalkalibacterium halodurans (strain ATCC BAA-125 / DSM 18197 / FERM 7344 / JCM 9153 / C-125) (Bacillus halodurans).